The following is a 331-amino-acid chain: D-alanine--D-alanine ligase (331 aa).

Positions 116-316 (KRLWQTHSLP…YEDFVLQLAA (201 aa)) constitute an ATP-grasp domain. Residue 142 to 197 (ADRLGLPLIVKPAREGSSIGLTKVTSVAELPAAYEKAARLDRDVMAEQFIDGDELT) participates in ATP binding. Mg(2+)-binding residues include D269, E283, and N285.

The protein belongs to the D-alanine--D-alanine ligase family. It depends on Mg(2+) as a cofactor. Mn(2+) serves as cofactor.

The protein localises to the cytoplasm. It carries out the reaction 2 D-alanine + ATP = D-alanyl-D-alanine + ADP + phosphate + H(+). The protein operates within cell wall biogenesis; peptidoglycan biosynthesis. Its function is as follows. Cell wall formation. The polypeptide is D-alanine--D-alanine ligase (Ralstonia nicotianae (strain ATCC BAA-1114 / GMI1000) (Ralstonia solanacearum)).